Here is a 298-residue protein sequence, read N- to C-terminus: ATP phosphoribosyltransferase (298 aa).

Belongs to the ATP phosphoribosyltransferase family.

Its subcellular location is the cytoplasm. The enzyme catalyses 1-(5-phospho-beta-D-ribosyl)-ATP + diphosphate = 5-phospho-alpha-D-ribose 1-diphosphate + ATP. It functions in the pathway amino-acid biosynthesis; L-histidine biosynthesis; L-histidine from 5-phospho-alpha-D-ribose 1-diphosphate: step 1/9. Catalyzes the condensation of ATP and 5-phosphoribose 1-diphosphate to form N'-(5'-phosphoribosyl)-ATP (PR-ATP). Has a crucial role in the pathway because the rate of histidine biosynthesis seems to be controlled primarily by regulation of the enzymatic activity. The polypeptide is ATP phosphoribosyltransferase (HIS1) (Candida albicans (strain SC5314 / ATCC MYA-2876) (Yeast)).